The primary structure comprises 466 residues: Argininosuccinate lyase (466 aa).

Residues S27, N114, and T159 each contribute to the 2-(N(omega)-L-arginino)succinate site. Catalysis depends on H160, which acts as the Proton acceptor. S281 (proton donor) is an active-site residue. Residues N289, Y321, Q326, and K329 each coordinate 2-(N(omega)-L-arginino)succinate.

The protein belongs to the lyase 1 family. Argininosuccinate lyase subfamily. As to quaternary structure, homotetramer. Eye lens.

The catalysed reaction is 2-(N(omega)-L-arginino)succinate = fumarate + L-arginine. It participates in amino-acid biosynthesis; L-arginine biosynthesis; L-arginine from L-ornithine and carbamoyl phosphate: step 3/3. Delta crystallin, the principal crystallin in embryonic lens, is found only in birds and reptiles. This protein also functions as an enzymatically active argininosuccinate lyase. The polypeptide is Argininosuccinate lyase (ASL) (Anser anser anser (Western greylag goose)).